The primary structure comprises 566 residues: CTP synthase (566 aa).

The tract at residues 1–270 (MTKFVFVTGG…DGLICDKLRL (270 aa)) is amidoligase domain. A CTP-binding site is contributed by Ser13. Ser13 is a UTP binding site. Residues 14–19 (SLGKGI) and Asp71 each bind ATP. The Mg(2+) site is built by Asp71 and Glu144. CTP-binding positions include 151 to 153 (DIE), 191 to 196 (KTKPTQ), and Lys227. Residues 191–196 (KTKPTQ) and Lys227 contribute to the UTP site. The region spanning 295–547 (SIAMVGKYVD…IAATLEQRSA (253 aa)) is the Glutamine amidotransferase type-1 domain. Gly356 lines the L-glutamine pocket. Cys383 serves as the catalytic Nucleophile; for glutamine hydrolysis. Residues 384–387 (LGMQ), Glu407, and Arg473 contribute to the L-glutamine site. Catalysis depends on residues His520 and Glu522.

It belongs to the CTP synthase family. In terms of assembly, homotetramer.

It carries out the reaction UTP + L-glutamine + ATP + H2O = CTP + L-glutamate + ADP + phosphate + 2 H(+). The catalysed reaction is L-glutamine + H2O = L-glutamate + NH4(+). It catalyses the reaction UTP + NH4(+) + ATP = CTP + ADP + phosphate + 2 H(+). It functions in the pathway pyrimidine metabolism; CTP biosynthesis via de novo pathway; CTP from UDP: step 2/2. Its activity is regulated as follows. Allosterically activated by GTP, when glutamine is the substrate; GTP has no effect on the reaction when ammonia is the substrate. The allosteric effector GTP functions by stabilizing the protein conformation that binds the tetrahedral intermediate(s) formed during glutamine hydrolysis. Inhibited by the product CTP, via allosteric rather than competitive inhibition. Functionally, catalyzes the ATP-dependent amination of UTP to CTP with either L-glutamine or ammonia as the source of nitrogen. Regulates intracellular CTP levels through interactions with the four ribonucleotide triphosphates. The polypeptide is CTP synthase (Polaromonas naphthalenivorans (strain CJ2)).